We begin with the raw amino-acid sequence, 439 residues long: Taxadien-5-alpha-ol O-acetyltransferase (439 aa).

Active-site proton acceptor residues include histidine 164 and aspartate 373.

The protein belongs to the plant acyltransferase family.

The catalysed reaction is taxa-4(20),11-dien-5alpha-ol + acetyl-CoA = taxa-4(20),11-dien-5alpha-yl acetate + CoA. Its pathway is alkaloid biosynthesis; taxol biosynthesis; 10-deacetyl-2-debenzoylbaccatin III from taxa-4(20),11-dien-5alpha-ol: step 1/3. The protein is Taxadien-5-alpha-ol O-acetyltransferase (TAT) of Taxus cuspidata (Japanese yew).